The sequence spans 590 residues: Cell division protein FtsZ 1 (590 aa).

Residues 24-28, 111-113, Glu-142, Arg-146, and Asp-190 each bind GTP; these read GGGGN and GTG. 2 disordered regions span residues 346-372 and 524-590; these read AAVP…QPLQ and EATN…RQSS. Positions 534-546 are enriched in low complexity; sequence AAAPSAASQQRRP. Residues 559–576 show a composition bias toward basic and acidic residues; the sequence is GQLDDHGRAAPQMRSHED.

Belongs to the FtsZ family. Homodimer. Polymerizes to form a dynamic ring structure in a strictly GTP-dependent manner. Interacts directly with several other division proteins.

Its subcellular location is the cytoplasm. In terms of biological role, essential cell division protein that forms a contractile ring structure (Z ring) at the future cell division site. The regulation of the ring assembly controls the timing and the location of cell division. One of the functions of the FtsZ ring is to recruit other cell division proteins to the septum to produce a new cell wall between the dividing cells. Binds GTP and shows GTPase activity. The chain is Cell division protein FtsZ 1 from Rhizobium meliloti (strain 1021) (Ensifer meliloti).